Here is a 66-residue protein sequence, read N- to C-terminus: Putative ankyrin repeat protein RF_pd14 (66 aa).

The stretch at 14-66 is one ANK repeat; that stretch reads KLNQKLMRAAATGDIEAVQKLVLRGADIYCRDHQGDTALSLAAGSGYLDILDI.

This is Putative ankyrin repeat protein RF_pd14 from Rickettsia felis (strain ATCC VR-1525 / URRWXCal2) (Rickettsia azadi).